The chain runs to 178 residues: Crossover junction endodeoxyribonuclease RuvC (178 aa).

Active-site residues include Asp11, Glu71, and Asp143. Asp11, Glu71, and Asp143 together coordinate Mg(2+).

The protein belongs to the RuvC family. Homodimer which binds Holliday junction (HJ) DNA. The HJ becomes 2-fold symmetrical on binding to RuvC with unstacked arms; it has a different conformation from HJ DNA in complex with RuvA. In the full resolvosome a probable DNA-RuvA(4)-RuvB(12)-RuvC(2) complex forms which resolves the HJ. The cofactor is Mg(2+).

It localises to the cytoplasm. It catalyses the reaction Endonucleolytic cleavage at a junction such as a reciprocal single-stranded crossover between two homologous DNA duplexes (Holliday junction).. In terms of biological role, the RuvA-RuvB-RuvC complex processes Holliday junction (HJ) DNA during genetic recombination and DNA repair. Endonuclease that resolves HJ intermediates. Cleaves cruciform DNA by making single-stranded nicks across the HJ at symmetrical positions within the homologous arms, yielding a 5'-phosphate and a 3'-hydroxyl group; requires a central core of homology in the junction. The consensus cleavage sequence is 5'-(A/T)TT(C/G)-3'. Cleavage occurs on the 3'-side of the TT dinucleotide at the point of strand exchange. HJ branch migration catalyzed by RuvA-RuvB allows RuvC to scan DNA until it finds its consensus sequence, where it cleaves and resolves the cruciform DNA. This is Crossover junction endodeoxyribonuclease RuvC from Neisseria meningitidis serogroup A / serotype 4A (strain DSM 15465 / Z2491).